The sequence spans 374 residues: 4-hydroxy-3-methylbut-2-en-1-yl diphosphate synthase (flavodoxin) (374 aa).

The [4Fe-4S] cluster site is built by C270, C273, C305, and E312.

The protein belongs to the IspG family. [4Fe-4S] cluster serves as cofactor.

The catalysed reaction is (2E)-4-hydroxy-3-methylbut-2-enyl diphosphate + oxidized [flavodoxin] + H2O + 2 H(+) = 2-C-methyl-D-erythritol 2,4-cyclic diphosphate + reduced [flavodoxin]. It functions in the pathway isoprenoid biosynthesis; isopentenyl diphosphate biosynthesis via DXP pathway; isopentenyl diphosphate from 1-deoxy-D-xylulose 5-phosphate: step 5/6. In terms of biological role, converts 2C-methyl-D-erythritol 2,4-cyclodiphosphate (ME-2,4cPP) into 1-hydroxy-2-methyl-2-(E)-butenyl 4-diphosphate. The sequence is that of 4-hydroxy-3-methylbut-2-en-1-yl diphosphate synthase (flavodoxin) from Vibrio cholerae serotype O1 (strain ATCC 39315 / El Tor Inaba N16961).